The sequence spans 367 residues: Dual specificity protein phosphatase 1 (367 aa).

One can recognise a Rhodanese domain in the interval 20–137; that stretch reads RAAQCLLLDC…FSASCPELCS (118 aa). The 142-residue stretch at 173–314 folds into the Tyrosine-protein phosphatase domain; the sequence is GPVEILPFLY…LLQFESQVLA (142 aa). C258 (phosphocysteine intermediate) is an active-site residue. S359 and S364 each carry phosphoserine; by MAPK1 and MAPK3.

Belongs to the protein-tyrosine phosphatase family. Non-receptor class dual specificity subfamily. Phosphorylation at Ser-359 and Ser-364 by MAPK1/ERK2 and MAPK3/ERK1 reduces its rate of degradation. In terms of processing, 'Lys-48'-linked polyubiquitinated by NEURL3, leading to proteasomal degradation. In terms of tissue distribution, expressed at high levels in the lung, liver placenta and pancreas. Moderate levels seen in the heart and skeletal muscle. Lower levels found in the brain and kidney.

The protein resides in the nucleus. It catalyses the reaction O-phospho-L-tyrosyl-[protein] + H2O = L-tyrosyl-[protein] + phosphate. The catalysed reaction is O-phospho-L-seryl-[protein] + H2O = L-seryl-[protein] + phosphate. The enzyme catalyses O-phospho-L-threonyl-[protein] + H2O = L-threonyl-[protein] + phosphate. In terms of biological role, dual specificity phosphatase that dephosphorylates MAP kinase MAPK1/ERK2 on both 'Thr-183' and 'Tyr-185', regulating its activity during the meiotic cell cycle. This chain is Dual specificity protein phosphatase 1, found in Homo sapiens (Human).